The following is a 1192-amino-acid chain: Plakophilin-4 (1192 aa).

The segment at 1–31 is disordered; that stretch reads MPAPEQASLVEEGQPQTRQEAASTGPGMEPE. Residues 36 to 70 are a coiled coil; it reads TILASVKEQELQFQRLTRELEVERQIVASQLERCR. The tract at residues 73-262 is disordered; it reads AESPSIASTS…PRPLNPSAYS (190 aa). Phosphoserine is present on S75. The segment covering 77-86 has biased composition (polar residues); it reads SIASTSSTEK. T84 carries the post-translational modification Phosphothreonine. Residues S106, S132, S136, and S139 each carry the phosphoserine modification. 3 stretches are compositionally biased toward polar residues: residues 138-156, 163-204, and 214-230; these read GSLG…SDSG, FHNS…QPSV, and SVPS…STGV. A phosphoserine mark is found at S221, S231, and S236. Residues 231 to 242 are compositionally biased toward low complexity; that stretch reads SPSRGSLRTSLG. Residues R254 and R270 each carry the omega-N-methylarginine modification. 2 positions are modified to phosphoserine: S273 and S281. The disordered stretch occupies residues 290–310; that stretch reads SVTSRQTSNPNGPTPQYQTTA. Phosphoserine is present on residues S314, S327, and S337. The segment at 323 to 348 is disordered; the sequence is TRVASPSQGQVGSSSPKRSGMTAVPQ. Residues 325 to 338 show a composition bias toward low complexity; sequence VASPSQGQVGSSSP. Y372 carries the phosphotyrosine modification. A phosphoserine mark is found at S392, S403, and S406. Position 412 is a phosphothreonine (T412). Y415 is modified (phosphotyrosine). An ARM 1 repeat occupies 415–455; the sequence is YEGRTYYSPVYRSPNHGTVELQGSQTALYRTGSVGIGNLQR. S422, S427, and S438 each carry phosphoserine. The residue at position 478 (Y478) is a Phosphotyrosine. A phosphoserine mark is found at S510, S512, and S515. ARM repeat units follow at residues 518–557, 560–599, 604–644, 660–702, and 706–751; these read KDPR…HLCF, NKVK…NLVF, DENK…NLSS, LTNT…NLSS, and EARK…NLSY. Over residues 773-782 the composition is skewed to basic and acidic residues; that stretch reads GKESPSKDSE. The tract at residues 773-810 is disordered; the sequence is GKESPSKDSEPSCWGKKKKKKKRTPQEDQWDGVGPIPG. Residue S776 is modified to Phosphoserine. ARM repeat units follow at residues 815-855, 862-901, and 950-993; these read PKGV…NLSA, AYIR…NMAL, and MENA…TLWQ. Phosphothreonine is present on residues T1013 and T1017. Phosphoserine is present on S1045. Residues 1058–1086 form a disordered region; it reads PRSEYDRTQPPMQYYNSQGDATHKGLYPG. The span at 1067–1077 shows a compositional bias: polar residues; the sequence is PPMQYYNSQGD. Phosphoserine is present on residues S1091, S1100, and S1135.

It belongs to the beta-catenin family. In terms of assembly, interacts with PDZD2. Interacts (via the C-terminus) with FRMPD2 (via the PDZ 2 domain). Interacts with RHOA; the interaction is detected at the midbody. Interacts with ECT2; the interaction is detected at the midbody. Interacts with CCDC85B. Expressed in salivary glands (at protein level). Expressed in arrector pili muscle (at protein level).

Its subcellular location is the cell junction. The protein resides in the desmosome. It is found in the cytoplasm. The protein localises to the cytoskeleton. It localises to the spindle. Its subcellular location is the midbody. The protein resides in the cell membrane. Plays a role as a regulator of Rho activity during cytokinesis. May play a role in junctional plaques. In Homo sapiens (Human), this protein is Plakophilin-4 (PKP4).